Here is a 101-residue protein sequence, read N- to C-terminus: Interleukin-8 (101 aa).

The N-terminal stretch at 1-22 (MPSQLRVAVLAAFLLSAVLCEG) is a signal peptide. 2 cysteine pairs are disulfide-bonded: C34–C61 and C36–C77.

This sequence belongs to the intercrine alpha (chemokine CxC) family. As to quaternary structure, homodimer. Interacts with TNFAIP6 (via Link domain); this interaction interferes with chemokine binding to glycosaminoglycans.

It is found in the secreted. In terms of biological role, chemotactic factor that mediates inflammatory response by attracting neutrophils, basophils, and T-cells to clear pathogens and protect the host from infection. Also plays an important role in neutrophil activation. Released in response to an inflammatory stimulus, exerts its effect by binding to the G-protein-coupled receptors CXCR1 and CXCR2, primarily found in neutrophils, monocytes and endothelial cells. G-protein heterotrimer (alpha, beta, gamma subunits) constitutively binds to CXCR1/CXCR2 receptor and activation by IL8 leads to beta and gamma subunits release from Galpha (GNAI2 in neutrophils) and activation of several downstream signaling pathways including PI3K and MAPK pathways. This is Interleukin-8 (CXCL8) from Cavia porcellus (Guinea pig).